The sequence spans 129 residues: Glyoxalase domain-containing protein 5 homolog (129 aa).

The VOC domain occupies 5–128 (RLDHLVLTVS…DYNLIEISNY (124 aa)).

This sequence belongs to the glyoxalase I family.

The sequence is that of Glyoxalase domain-containing protein 5 homolog (glod5) from Dictyostelium discoideum (Social amoeba).